The following is a 163-amino-acid chain: Epithelial membrane protein 3 (163 aa).

Residues 4–24 (LLLVVSALHILILILLFVATL) form a helical membrane-spanning segment. N-linked (GlcNAc...) asparagine glycans are attached at residues N47 and N56. The next 3 helical transmembrane spans lie at 66-86 (VQVL…LFMF), 100-120 (TGLC…IYAI), and 139-159 (FALA…YIHL).

Belongs to the PMP-22/EMP/MP20 family.

It localises to the membrane. In terms of biological role, probably involved in cell proliferation and cell-cell interactions. The protein is Epithelial membrane protein 3 (EMP3) of Homo sapiens (Human).